The following is a 388-amino-acid chain: MTNINRIGLTWISFLSYAFTGALVVVTGMIMGNISNYFHLSISQMSNIFTFLNAGILVSIFINSWLIEIISLKKQLIFSFILTIIAVIGIVLCNSIFLFSINMFILGLVSGITMSIGTFIITHLYSGSKRGSLLLLTDSFFSMSGMIFPIVTAYLLEKKIIWYWSYICIGAIYLLIFLLTINSSFEKFKTNTKNSKETKEKWNFNVFLLSISALLYILGQLGFISWVPQYATEIMNIDIKKTGSLVSGFWMSYMLGMWFFSFIIKFFNLYRMFIFLTSMSTILMYCFIKSENFLNQQYIIISLGFFSSAIYTIIITLASLQTKHPSPKLINLILLFGTIGTFLTFIITSPIVEAKGLYVTLISSNILYGIVFFLSILIYFNKKYEGVI.

A run of 12 helical transmembrane segments spans residues 11 to 31, 50 to 70, 77 to 97, 101 to 121, 133 to 153, 160 to 180, 206 to 226, 244 to 264, 268 to 288, 298 to 318, 332 to 352, and 360 to 380; these read WISF…GMIM, TFLN…IEII, IFSF…NSIF, INMF…TFII, LLLL…IVTA, IIWY…FLLT, VFLL…FISW, SLVS…SFII, NLYR…YCFI, YIII…ITLA, LILL…SPIV, and TLIS…LIYF.

It belongs to the major facilitator superfamily. TsgA family.

It localises to the cell membrane. The chain is Protein TsgA homolog from Buchnera aphidicola subsp. Acyrthosiphon pisum (strain Tuc7).